A 574-amino-acid chain; its full sequence is ATP synthase subunit beta, mitochondrial (574 aa).

A mitochondrion-targeting transit peptide spans 1-26 (MLSSVRLAALRAGKTNSVFQAVRAFA). 183-190 (GGAGVGKT) lines the ATP pocket.

It belongs to the ATPase alpha/beta chains family. F-type ATPases have 2 components, CF(1) - the catalytic core - and CF(0) - the membrane proton channel. CF(1) has five subunits: alpha(3), beta(3), gamma(1), delta(1), epsilon(1). CF(0) has three main subunits: a, b and c.

The protein localises to the mitochondrion. Its subcellular location is the mitochondrion inner membrane. It carries out the reaction ATP + H2O + 4 H(+)(in) = ADP + phosphate + 5 H(+)(out). In terms of biological role, mitochondrial membrane ATP synthase (F(1)F(0) ATP synthase or Complex V) produces ATP from ADP in the presence of a proton gradient across the membrane which is generated by electron transport complexes of the respiratory chain. F-type ATPases consist of two structural domains, F(1) - containing the extramembraneous catalytic core, and F(0) - containing the membrane proton channel, linked together by a central stalk and a peripheral stalk. During catalysis, ATP synthesis in the catalytic domain of F(1) is coupled via a rotary mechanism of the central stalk subunits to proton translocation. Subunits alpha and beta form the catalytic core in F(1). Rotation of the central stalk against the surrounding alpha(3)beta(3) subunits leads to hydrolysis of ATP in three separate catalytic sites on the beta subunits. In Chlamydomonas reinhardtii (Chlamydomonas smithii), this protein is ATP synthase subunit beta, mitochondrial (ATP2).